We begin with the raw amino-acid sequence, 102 residues long: DNA/RNA-binding protein Alba 2 (102 aa).

Positions 10, 13, 40, 42, 43, 46, and 86 each coordinate DNA.

It belongs to the histone-like Alba family. In terms of assembly, forms homodimers and homotetramers; oligomerization is enhanced and stabilized by DNA. Interacts with Alba 1.

It localises to the cytoplasm. The protein resides in the chromosome. In terms of biological role, binds double-stranded DNA tightly but without sequence specificity. Involved in DNA compaction. The sequence is that of DNA/RNA-binding protein Alba 2 from Aeropyrum pernix (strain ATCC 700893 / DSM 11879 / JCM 9820 / NBRC 100138 / K1).